A 347-amino-acid polypeptide reads, in one-letter code: Phosphate acyltransferase (347 aa).

This sequence belongs to the PlsX family. As to quaternary structure, homodimer. Probably interacts with PlsY.

Its subcellular location is the cytoplasm. It catalyses the reaction a fatty acyl-[ACP] + phosphate = an acyl phosphate + holo-[ACP]. It participates in lipid metabolism; phospholipid metabolism. Its function is as follows. Catalyzes the reversible formation of acyl-phosphate (acyl-PO(4)) from acyl-[acyl-carrier-protein] (acyl-ACP). This enzyme utilizes acyl-ACP as fatty acyl donor, but not acyl-CoA. This chain is Phosphate acyltransferase, found in Sinorhizobium fredii (strain NBRC 101917 / NGR234).